The sequence spans 65 residues: Large ribosomal subunit protein uL29 (65 aa).

It belongs to the universal ribosomal protein uL29 family.

The sequence is that of Large ribosomal subunit protein uL29 from Syntrophus aciditrophicus (strain SB).